Here is a 316-residue protein sequence, read N- to C-terminus: Acetyl-coenzyme A carboxylase carboxyl transferase subunit alpha (316 aa).

One can recognise a CoA carboxyltransferase C-terminal domain in the interval 39-293 (RLQDKSKALT…RGELLAQLKM (255 aa)).

The protein belongs to the AccA family. In terms of assembly, acetyl-CoA carboxylase is a heterohexamer composed of biotin carboxyl carrier protein (AccB), biotin carboxylase (AccC) and two subunits each of ACCase subunit alpha (AccA) and ACCase subunit beta (AccD).

The protein resides in the cytoplasm. The enzyme catalyses N(6)-carboxybiotinyl-L-lysyl-[protein] + acetyl-CoA = N(6)-biotinyl-L-lysyl-[protein] + malonyl-CoA. It participates in lipid metabolism; malonyl-CoA biosynthesis; malonyl-CoA from acetyl-CoA: step 1/1. Its function is as follows. Component of the acetyl coenzyme A carboxylase (ACC) complex. First, biotin carboxylase catalyzes the carboxylation of biotin on its carrier protein (BCCP) and then the CO(2) group is transferred by the carboxyltransferase to acetyl-CoA to form malonyl-CoA. This Pseudomonas aeruginosa (strain UCBPP-PA14) protein is Acetyl-coenzyme A carboxylase carboxyl transferase subunit alpha.